The primary structure comprises 179 residues: Adenine phosphoribosyltransferase (179 aa).

The protein belongs to the purine/pyrimidine phosphoribosyltransferase family. Homodimer.

Its subcellular location is the cytoplasm. The enzyme catalyses AMP + diphosphate = 5-phospho-alpha-D-ribose 1-diphosphate + adenine. Its pathway is purine metabolism; AMP biosynthesis via salvage pathway; AMP from adenine: step 1/1. Catalyzes a salvage reaction resulting in the formation of AMP, that is energically less costly than de novo synthesis. The chain is Adenine phosphoribosyltransferase from Jannaschia sp. (strain CCS1).